Reading from the N-terminus, the 407-residue chain is Semenogelin-2 (407 aa).

Positions 1 to 23 (MKSIILFVLSLVLILEKQAAVMG) are cleaved as a signal peptide. Disordered regions lie at residues 25 to 60 (KDGS…TKSK), 133 to 158 (GQAH…LSSQ), 173 to 192 (KEQA…GSQS), and 272 to 407 (NLNQ…NKIS). 3 stretches are compositionally biased toward polar residues: residues 31-40 (QLPSGSSQFP), 137-158 (CGTQ…LSSQ), and 174-192 (EQAS…GSQS). Basic and acidic residues predominate over residues 292–310 (RTEERQLNHGEKSVQKDVS). Over residues 325-334 (KSQNQVTIHS) the composition is skewed to polar residues. Basic and acidic residues predominate over residues 335 to 345 (QDQEHGHKENK). Residues 372 to 397 (GSISIQTEEQIHGKSQNXVRIPSQAQ) show a composition bias toward polar residues.

Belongs to the semenogelin family. As to quaternary structure, interacts with SERPINA5.

The protein localises to the secreted. Participates in the formation of a gel matrix (sperm coagulum) entrapping the accessory gland secretions and ejaculated spermatozoa. The chain is Semenogelin-2 (SEMG2) from Pan troglodytes (Chimpanzee).